We begin with the raw amino-acid sequence, 73 residues long: uncharacterized protein (73 aa).

This sequence belongs to the asfivirus I73R family.

It localises to the virion. This is an uncharacterized protein from Ornithodoros (relapsing fever ticks).